A 233-amino-acid polypeptide reads, in one-letter code: RNA/RNP complex-1-interacting phosphatase homolog (233 aa).

The segment covering 1–14 (MSNYHHNHNYQHRP) has biased composition (basic residues). The segment at 1–21 (MSNYHHNHNYQHRPRGYERLP) is disordered. Residues 34 to 206 (NVGRDIDGTR…LYEAERKKKY (173 aa)) form the Tyrosine-protein phosphatase domain. C150 acts as the Phosphocysteine intermediate in catalysis. 151 to 156 (THGLNR) contacts substrate. Catalysis depends on R156, which acts as the Proton donor/acceptor. The disordered stretch occupies residues 204–233 (KKYGKSSGKSSGNSADSTISSEQLHRNNSQ). Low complexity predominate over residues 208-217 (KSSGKSSGNS). Residues 218–233 (ADSTISSEQLHRNNSQ) show a composition bias toward polar residues.

It belongs to the protein-tyrosine phosphatase family. Non-receptor class dual specificity subfamily. In terms of assembly, interacts with the ERI/DICER complex component dcr-1. Interacts with ERI/DICER complex components rrf-3 and isoform b of eri-1. Interacts with drh-3 and rde-8.

It localises to the cytoplasm. The protein localises to the nucleus. Functionally, RNA polyphosphatase which has RNA 5'-triphosphatase and diphosphatase activities. Displays poor protein-tyrosine phosphatase activity. Binds to 5'-triphosphorylated RNAs (also called ppp-RNAs). Dephosphorylates ppp-RNAs converting them to 5'-monophosphorylated RNAs (also called p-RNAs). During small-RNA-mediated gene-silencing or RNA interference (RNAi), involved in the dcr-1-mediated processing of an amplified dsRNA intermediate. This is most likely in association with several components of the ERI/DICER complex including dcr-1, eri-1 and rrf-3. Plays a role in the biogenesis of 26G small interfering RNAs (26G-siRNAs), which are a class of 26 nucleotide siRNAs that possess a guanine residue at the 5'-end, by dephosphorylating 5'-triphosphorylated 26G-siRNAs prior to their maturation by the ERI/DICER complex. Plays a role in the biogenesis of csr-1-bound 22G small interfering RNAs (22G-siRNAs), which are a class of 22 nucleotide siRNAs that possess a guanine residue at the 5'-end. Not required for the biogenesis of microRNAs (miRNA) or for the biogenesis of a class of 21 nucleotide PIWI-interacting RNAs (piRNAs) that possess a uracil residue at the 5'-end (also called 21U-RNAs). This Caenorhabditis elegans protein is RNA/RNP complex-1-interacting phosphatase homolog.